The sequence spans 213 residues: Adenylate kinase (213 aa).

10–15 contacts ATP; sequence GSGKGT. Residues 30-59 are NMP; that stretch reads SVGDLLRNIISSSSELGKKIKGTVESGNLI. AMP contacts are provided by residues Arg36, 57–59, 83–86, and Gln90; these read NLI and GFPR. The interval 125–160 is LID; sequence NRLACLDCKSIYSVSSFKSTTCAKCKSTRLEKRIDD. Arg126 contacts ATP. Positions 129 and 132 each coordinate Zn(2+). ATP is bound at residue 135 to 136; sequence IY. 2 residues coordinate Zn(2+): Cys146 and Cys149. Residues Arg157 and Arg169 each contribute to the AMP site. Leu195 provides a ligand contact to ATP.

The protein belongs to the adenylate kinase family. In terms of assembly, monomer.

The protein resides in the cytoplasm. The catalysed reaction is AMP + ATP = 2 ADP. It functions in the pathway purine metabolism; AMP biosynthesis via salvage pathway; AMP from ADP: step 1/1. In terms of biological role, catalyzes the reversible transfer of the terminal phosphate group between ATP and AMP. Plays an important role in cellular energy homeostasis and in adenine nucleotide metabolism. This Wolbachia sp. subsp. Drosophila simulans (strain wRi) protein is Adenylate kinase.